We begin with the raw amino-acid sequence, 205 residues long: Ribonuclease HII (205 aa).

The RNase H type-2 domain occupies 1–203; sequence MKAGIDEAGK…VSNLRQKTLD (203 aa). A divalent metal cation-binding residues include Asp-6 and Glu-7. Residue Arg-46 participates in substrate binding. A divalent metal cation is bound at residue Asp-101. The substrate site is built by Lys-143, Arg-146, and Tyr-164.

It belongs to the RNase HII family. Mn(2+) serves as cofactor. Mg(2+) is required as a cofactor.

It is found in the cytoplasm. It carries out the reaction Endonucleolytic cleavage to 5'-phosphomonoester.. Functionally, endonuclease that specifically degrades the RNA of RNA-DNA hybrids. The chain is Ribonuclease HII (rnhB) from Archaeoglobus fulgidus (strain ATCC 49558 / DSM 4304 / JCM 9628 / NBRC 100126 / VC-16).